The chain runs to 431 residues: Ribonuclease TTHA0252 (431 aa).

Residues histidine 59, histidine 61, aspartate 63, histidine 64, histidine 141, aspartate 162, and histidine 400 each contribute to the Zn(2+) site.

Belongs to the metallo-beta-lactamase superfamily. RNA-metabolizing metallo-beta-lactamase-like family. In terms of assembly, monomer. Zn(2+) is required as a cofactor.

Its subcellular location is the cytoplasm. With respect to regulation, inhibited by cadmium, cobalt, manganese, magnesium, calcium and nickel ions. Its function is as follows. Has endoribonuclease activity towards 23S and 16S rRNA (in vitro). The chain is Ribonuclease TTHA0252 from Thermus thermophilus (strain ATCC 27634 / DSM 579 / HB8).